A 354-amino-acid polypeptide reads, in one-letter code: Major egg antigen (354 aa).

The segment at 1–21 is disordered; that stretch reads MSGGKQHNAVSIPVNREQRSF. 2 sHSP domains span residues 122-233 and 251-354; these read SVND…VAVR and AKGV…AITH.

Belongs to the small heat shock protein (HSP20) family.

This is Major egg antigen from Schistosoma mansoni (Blood fluke).